Consider the following 156-residue polypeptide: MSDRKPVRGRHQARKRAVDLLFEAEVRGISAAEVVDTRAALAEAKPDIARLHPYTAAVARGVSEHAAHIDDLITAHLRGWTLDRLPAVDRAILRVSVWELLHAADVPEPVVVDEAVQLAKELSTDDSPGFVNGVLGQVMLVTPQLRAAAQAVRGGA.

It belongs to the NusB family.

Functionally, involved in transcription antitermination. Required for transcription of ribosomal RNA (rRNA) genes. Binds specifically to the boxA antiterminator sequence of the ribosomal RNA (rrn) operons. The chain is Transcription antitermination protein NusB from Mycobacterium bovis (strain ATCC BAA-935 / AF2122/97).